The primary structure comprises 484 residues: Glycogen synthase (484 aa).

Residue Lys15 participates in ADP-alpha-D-glucose binding.

The protein belongs to the glycosyltransferase 1 family. Bacterial/plant glycogen synthase subfamily.

The catalysed reaction is [(1-&gt;4)-alpha-D-glucosyl](n) + ADP-alpha-D-glucose = [(1-&gt;4)-alpha-D-glucosyl](n+1) + ADP + H(+). It functions in the pathway glycan biosynthesis; glycogen biosynthesis. Its function is as follows. Synthesizes alpha-1,4-glucan chains using ADP-glucose. The chain is Glycogen synthase (glgA) from Bacillus subtilis (strain 168).